Consider the following 40-residue polypeptide: Photosystem II reaction center protein J (40 aa).

The helical transmembrane segment at 8–28 (IPLWLIGTVTGIIVIGLIGIF) threads the bilayer.

Belongs to the PsbJ family. PSII is composed of 1 copy each of membrane proteins PsbA, PsbB, PsbC, PsbD, PsbE, PsbF, PsbH, PsbI, PsbJ, PsbK, PsbL, PsbM, PsbT, PsbX, PsbY, PsbZ, Psb30/Ycf12, at least 3 peripheral proteins of the oxygen-evolving complex and a large number of cofactors. It forms dimeric complexes.

It is found in the plastid. It localises to the chloroplast thylakoid membrane. Its function is as follows. One of the components of the core complex of photosystem II (PSII). PSII is a light-driven water:plastoquinone oxidoreductase that uses light energy to abstract electrons from H(2)O, generating O(2) and a proton gradient subsequently used for ATP formation. It consists of a core antenna complex that captures photons, and an electron transfer chain that converts photonic excitation into a charge separation. The protein is Photosystem II reaction center protein J of Piper cenocladum (Ant piper).